Here is a 130-residue protein sequence, read N- to C-terminus: Cholecystokinin (130 aa).

A signal peptide spans 1–20; it reads MYSGICICVFLAVLSASSFG. Positions 21–48 are excised as a propeptide; the sequence is QQTAGSHNGNPLAAELEQSLTEHHRHVR. The segment at 40–59 is disordered; sequence LTEHHRHVRAPSSAGPLKPV. Tyrosine 112 carries the sulfotyrosine modification. Phenylalanine amide is present on phenylalanine 118. Residues 122 to 130 constitute a propeptide that is removed on maturation; the sequence is SAEEYEYSS. Residues tyrosine 126 and tyrosine 128 each carry the sulfotyrosine modification.

Belongs to the gastrin/cholecystokinin family. In terms of processing, the precursor is cleaved by proteases to produce a number of active cholecystokinins. In terms of tissue distribution, highly concentrated in the duodenum. Also localized in more distal parts of the small intestine.

The protein localises to the secreted. Its function is as follows. This peptide hormone induces gall bladder contraction and the release of pancreatic enzymes in the gut. Its function in the brain is not clear. This is Cholecystokinin (CCK) from Struthio camelus (Common ostrich).